The following is an 839-amino-acid chain: Sodium/hydrogen exchanger 3 (839 aa).

The N-terminal stretch at 1 to 32 is a signal peptide; sequence MPLGVRGTRREFRFPVWGLLLLALWMLPRALG. Topologically, residues 33 to 56 are extracellular; that stretch reads VEEIPGPDSHEKQGFQIVTFKWHH. A helical transmembrane segment spans residues 57–79; sequence VQDPYIIALWILVASLAKIVFHL. The Cytoplasmic segment spans residues 80 to 87; sequence SHKVTSVV. Residues 88 to 107 traverse the membrane as a helical segment; that stretch reads PESALLIVLGLILGGIVWAA. Residues 108-116 lie on the Extracellular side of the membrane; it reads DHIASFTLT. A helical transmembrane segment spans residues 117-134; sequence PTVFFFYLLPPIVLDAGY. The Cytoplasmic segment spans residues 135 to 137; sequence FMP. A helical membrane pass occupies residues 138 to 173; it reads NRLFFGNLGTILLYAVIGTVWNAATTGLSLYGVYLS. 3 residues coordinate a 1,2-diacyl-sn-glycero-3-phospho-(1D-myo-inositol): G143, G146, and T147. At 174 to 186 the chain is on the extracellular side; that stretch reads GIMGDLSIGLLDF. The helical transmembrane segment at 187 to 208 threads the bilayer; that stretch reads LLFGSLIAAVDPVAVLAVFEEV. The Cytoplasmic segment spans residues 209–210; that stretch reads HV. The chain crosses the membrane as a helical span at residues 211-242; the sequence is NDVLFIIVFGESLLNDAVTVVLYNVFDSFVSL. The Extracellular portion of the chain corresponds to 243–249; the sequence is GADKVTG. Residues 250–284 form a helical membrane-spanning segment; that stretch reads VDCVKGIVSFFVVSLGGTLIGIIFAFLLSLVTRFT. Over 285–286 the chain is Cytoplasmic; that stretch reads KH. A helical membrane pass occupies residues 287–309; the sequence is VRIIEPGFVFIISYLSYLTSEML. Over 310 to 311 the chain is Extracellular; that stretch reads SL. A helical membrane pass occupies residues 312–328; the sequence is SAILAITFCGICCQKYV. The Cytoplasmic segment spans residues 329 to 335; it reads KANISEQ. Residues 336 to 364 traverse the membrane as a helical segment; sequence SATTVRYTMKMLASGAETIIFMFLGISAV. Residues 365-372 are Extracellular-facing; it reads DPAIWTWN. The chain crosses the membrane as a helical span at residues 373 to 394; sequence TAFILLTLVFISVYRAIGVVLQ. The Cytoplasmic portion of the chain corresponds to 395-407; that stretch reads TWLLNKYRMVQLE. A 1,2-diacyl-sn-glycero-3-phospho-(1D-myo-inositol) is bound at residue M403. The chain crosses the membrane as a helical span at residues 408-431; sequence IIDQVVMSYGGLRGAVAYALVVLL. At 432–438 the chain is on the extracellular side; it reads DEKKVKE. The chain crosses the membrane as a helical span at residues 439–472; the sequence is KNLFVSTTIIVVFFTVIFQGLTIKPLVQWLKVKK. At 473 to 839 the chain is on the cytoplasmic side; that stretch reads SEHREPKLNE…RSFLPESTHM (367 aa). Residues Q502, I503, and H505 each coordinate a 1,2-diacyl-sn-glycero-3-phospho-(1D-myo-inositol). A phosphoserine mark is found at S560 and S568. Positions 581-595 are interaction with EZR; it reads RPSTVEASVSYLLRE. The segment at 596-673 is interaction with NHERF4; it reads NVSTVCLDMQ…RKRLESFKST (78 aa). Residues 597 to 701 are interaction with AHCYL1; it reads VSTVCLDMQA…GQKRRNSSIP (105 aa). S598 and S613 each carry phosphoserine. Residue S669 is modified to Phosphoserine; by SGK1. Positions 688–697 are enriched in basic residues; it reads KRERGQKRRN. The segment at 688–710 is disordered; that stretch reads KRERGQKRRNSSIPNGKIPMESP. S724, S815, and S818 each carry phosphoserine.

The protein belongs to the monovalent cation:proton antiporter 1 (CPA1) transporter (TC 2.A.36) family. Homodimer. Found in the forms of complex and dynamic macromolecular complexes. Binds NHERF1 and NHERF2. Interacts with CHP1, CHP2 and SHANK2. Interacts with NHERF4 and interactions decrease in response to elevated calcium ion levels. Interacts with PDZK1 (via C-terminal PDZ domain). Interacts with AHCYL1; the interaction is required for SLC9A3 activity. Interacts with EZR; interaction targets SLC9A3 to the apical membrane. Interacts with SNX27 (via PDZ domains); directs SLC9A3 membrane insertion from early endosomes to the plasma membrane. Post-translationally, phosphorylated by PKA, which inhibits activity. Phosphorylation at Ser-669 by SGK1 is associated with increased abundance at the cell membrane.

It localises to the apical cell membrane. Its subcellular location is the cell membrane. It is found in the recycling endosome membrane. The protein resides in the early endosome membrane. The enzyme catalyses Na(+)(in) + H(+)(out) = Na(+)(out) + H(+)(in). With respect to regulation, seems to switch between active and inactive modes in response to various stimuli. Activated directly or indirectly by membrane phosphatidylinositol (PIs). Regulated by a variety of auxiliary proteins, which facilitate the maturation, cell surface expression and function of the transporter. Inhibited specifically by the drug tenapanor. Its function is as follows. Plasma membrane Na(+)/H(+) antiporter. Exchanges intracellular H(+) ions for extracellular Na(+) in 1:1 stoichiometry, playing a key role in salt and fluid absorption and pH homeostasis. Major apical Na(+)/H(+) exchanger in kidney and intestine playing an important role in renal and intestine Na(+) absorption and blood pressure regulation. This is Sodium/hydrogen exchanger 3 (SLC9A3) from Didelphis virginiana (North American opossum).